Consider the following 185-residue polypeptide: Ribosome-recycling factor (185 aa).

It belongs to the RRF family.

The protein resides in the cytoplasm. In terms of biological role, responsible for the release of ribosomes from messenger RNA at the termination of protein biosynthesis. May increase the efficiency of translation by recycling ribosomes from one round of translation to another. The sequence is that of Ribosome-recycling factor from Salinispora arenicola (strain CNS-205).